Reading from the N-terminus, the 303-residue chain is Recombination-associated protein RdgC (303 aa).

The protein belongs to the RdgC family.

The protein localises to the cytoplasm. It localises to the nucleoid. May be involved in recombination. In Enterobacter sp. (strain 638), this protein is Recombination-associated protein RdgC.